The following is a 237-amino-acid chain: Isoprenyl transferase (237 aa).

Asp14 is a catalytic residue. Residue Asp14 participates in Mg(2+) binding. Residues Gly15 to Arg18, Trp19, Arg27, His31, and Ser59 to Glu61 each bind substrate. Catalysis depends on Asn62, which acts as the Proton acceptor. Residues Trp63, Arg65, Arg184, and Arg190–Ser192 contribute to the substrate site. A Mg(2+)-binding site is contributed by Glu203.

It belongs to the UPP synthase family. Homodimer. Requires Mg(2+) as cofactor.

Functionally, catalyzes the condensation of isopentenyl diphosphate (IPP) with allylic pyrophosphates generating different type of terpenoids. The chain is Isoprenyl transferase from Helicobacter hepaticus (strain ATCC 51449 / 3B1).